We begin with the raw amino-acid sequence, 291 residues long: Zinc transporter ZupT (291 aa).

A run of 8 helical transmembrane segments spans residues 8-28 (IFIA…GSII), 39-59 (VLSL…FMEI), 74-94 (HWAE…SLLI), 147-167 (GIFT…ATFI), 174-194 (TLGI…GLAV), 209-229 (FIYS…GALI), 233-253 (FIGD…MVFI), and 271-291 (SLYG…LLGQ). Asn158 and Glu161 together coordinate Fe(2+). Glu161 and His186 together coordinate Zn(2+). The Fe(2+) site is built by Asn187, Glu190, and Glu219. Glu190 is a binding site for Zn(2+).

The protein belongs to the ZIP transporter (TC 2.A.5) family. ZupT subfamily.

It is found in the cell inner membrane. The catalysed reaction is Zn(2+)(in) = Zn(2+)(out). Its function is as follows. Mediates zinc uptake. May also transport other divalent cations. This is Zinc transporter ZupT from Campylobacter jejuni subsp. jejuni serotype O:2 (strain ATCC 700819 / NCTC 11168).